A 329-amino-acid polypeptide reads, in one-letter code: Prostaglandin reductase 1 (329 aa).

Threonine 18 carries the post-translational modification Phosphothreonine. At serine 20 the chain carries Phosphoserine. NADP(+) contacts are provided by residues 152–155, lysine 178, tyrosine 193, asparagine 217, 239–245, 270–272, and asparagine 321; these read GAVG, CGAISQY, and FIV. The residue at position 178 (lysine 178) is an N6-(2-hydroxyisobutyryl)lysine; alternate. Lysine 178 carries the post-translational modification N6-acetyllysine; alternate.

Belongs to the NADP-dependent oxidoreductase L4BD family. Monomer or homodimer.

Its subcellular location is the cytoplasm. The enzyme catalyses 13,14-dihydro-15-oxo-prostaglandin E1 + NADP(+) = 15-oxoprostaglandin E1 + NADPH + H(+). It carries out the reaction 13,14-dihydro-15-oxo-prostaglandin E2 + NADP(+) = 15-oxoprostaglandin E2 + NADPH + H(+). It catalyses the reaction 13,14-dihydro-15-oxo-prostaglandin F1alpha + NADP(+) = 15-oxoprostaglandin F1alpha + NADPH + H(+). The catalysed reaction is 13,14-dihydro-15-oxo-PGF2alpha + NADP(+) = 15-oxoprostaglandin F2alpha + NADPH + H(+). The enzyme catalyses leukotriene B4 + NADP(+) = 12-oxo-leukotriene B4 + NADPH + H(+). It carries out the reaction 20-hydroxy-leukotriene B4 + NADP(+) = 12-oxo-20-hydroxy-leukotriene B4 + NADPH + H(+). It catalyses the reaction 6-trans-leukotriene B4 + NADP(+) = 12-oxo-(5S)-hydroxy-(6E,8E,10E,14Z)-eicosatetraenoate + NADPH + H(+). The catalysed reaction is (5S,12S)-dihydroxy-(6E,10E,12E,14Z)-eicosatetraenoate + NADP(+) = 12-oxo-(5S)-hydroxy-(6E,8E,10E,14Z)-eicosatetraenoate + NADPH + H(+). The enzyme catalyses an n-alkanal + NADP(+) = an alk-2-enal + NADPH + H(+). It carries out the reaction hexanal + NADP(+) = (E)-hex-2-enal + NADPH + H(+). It catalyses the reaction octanal + NADP(+) = (2E)-octenal + NADPH + H(+). The catalysed reaction is decanal + NADP(+) = (2E)-decenal + NADPH + H(+). The enzyme catalyses dodecanal + NADP(+) = (2E)-dodecenal + NADPH + H(+). It carries out the reaction 4-hydroxynonanal + NADP(+) = (E)-4-hydroxynon-2-enal + NADPH + H(+). It catalyses the reaction pentan-2-one + NADP(+) = (E)-pent-3-en-2-one + NADPH + H(+). The catalysed reaction is nonan-2-one + NADP(+) = (3E)-nonen-2-one + NADPH + H(+). Functionally, NAD(P)H-dependent oxidoreductase involved in metabolic inactivation of pro- and anti-inflammatory eicosanoids: prostaglandins (PG), leukotrienes (LT) and lipoxins (LX). Catalyzes with high efficiency the reduction of the 13,14 double bond of 15-oxoPGs, including 15-oxo-PGE1, 15-oxo-PGE2, 15-oxo-PGF1-alpha and 15-oxo-PGF2-alpha. Catalyzes with lower efficiency the oxidation of the hydroxyl group at C12 of LTB4 and its derivatives, converting them into biologically less active 12-oxo-LTB4 metabolites. Reduces 15-oxo-LXA4 to 13,14 dihydro-15-oxo-LXA4, enhancing neutrophil recruitment at the inflammatory site. Plays a role in metabolic detoxification of alkenals and ketones. Reduces alpha,beta-unsaturated alkenals and ketones, particularly those with medium-chain length, showing highest affinity toward (2E)-decenal and (3E)-3-nonen-2-one. Inactivates 4-hydroxy-2-nonenal, a cytotoxic lipid constituent of oxidized low-density lipoprotein particles. The polypeptide is Prostaglandin reductase 1 (Ptgr1) (Rattus norvegicus (Rat)).